The primary structure comprises 238 residues: Cysteine-rich venom protein kaouthin-2 (238 aa).

An N-terminal signal peptide occupies residues 1–19 (MIAFIVLLSLAAVLQQSSG). Residues 20 to 25 (TVDFAS) constitute a propeptide that is removed on maturation. Residues 38 to 164 (VDKHNALRRS…SSKYLYVCQY (127 aa)) form the SCP domain. Disulfide bonds link Cys-75/Cys-153, Cys-92/Cys-165, Cys-148/Cys-162, Cys-184/Cys-191, Cys-187/Cys-196, Cys-200/Cys-233, Cys-209/Cys-227, and Cys-218/Cys-231. A ShKT domain is found at 200 to 233 (CKHHNVFSNCQSLAKQNACQTEWMKSKCAASCFC).

As to expression, expressed by the venom gland.

The protein localises to the secreted. The protein is Cysteine-rich venom protein kaouthin-2 of Naja kaouthia (Monocled cobra).